Reading from the N-terminus, the 467-residue chain is H(+)/Cl(-) exchange transporter ClcA (467 aa).

Over 1 to 30 (MTKRERIVKSVLAHVPKDAINQFVSRGSTP) the chain is Cytoplasmic. A helical membrane pass occupies residues 31 to 67 (FSVLIMAAIVGTLAGFVGTYFELAVHFVSETRTEWLR). At 68–74 (SEIGSVL) the chain is on the periplasmic side. The helical transmembrane segment at 75–98 (PLWLAAVLISALLAFIGYFLVHRF) threads the bilayer. The Selectivity filter part_1 signature appears at 104 to 108 (GSGIP). Position 105 (S105) interacts with chloride. Positions 107–114 (IPEIEGAM) form an intramembrane region, helical. Residues 115 to 121 (DNIRPVR) lie on the Cytoplasmic side of the membrane. A run of 2 helical transmembrane segments spans residues 122–139 (WWRV…ALGS) and 146–164 (EGPT…TDIF). Positions 144–148 (GREGP) match the Selectivity filter part_2 motif. The Cytoplasmic portion of the chain corresponds to 165–174 (RVKDDDTRHS). 2 intramembrane regions (helical) span residues 175–187 (LLAS…LAAA) and 191–199 (PLAGIMFVV). The Cytoplasmic portion of the chain corresponds to 200–212 (EEMRPQFRYSLIS). The chain crosses the membrane as a helical span at residues 213 to 230 (IRAVIISAIMANIVFRAI). Residues 231–250 (NGQDAVITMPQYQSPALQTL) are Periplasmic-facing. The helical transmembrane segment at 251–279 (WLFLLLGALFGVFGVIFNKLITVAQDSFV) threads the bilayer. Topologically, residues 280–285 (AIHKND) are cytoplasmic. The helical transmembrane segment at 286–307 (RKRYLITGSILGGVFGLLLLYV) threads the bilayer. Residues 308-327 (PQLTGGGIALIPDVTTGNYS) lie on the Periplasmic side of the membrane. Helical transmembrane passes span 328 to 347 (ISIL…LCFG) and 353 to 374 (GIFA…ASAD). The Selectivity filter part_3 signature appears at 353–357 (GIFAP). Chloride contacts are provided by I354 and F355. The Periplasmic portion of the chain corresponds to 375–384 (VLLPTLDIEP). Positions 385–399 (GVFAIAGMGALFAAT) form an intramembrane region, helical. The segment at residues 400–402 (VRA) is an intramembrane region (note=Loop between two helices). The segment at residues 403-414 (PITGILLVIEMT) is an intramembrane region (helical). The note=Loop between two helices intramembrane region spans 415-419 (NNYYL). The helical transmembrane segment at 420-436 (ILPLIITCLGAVIVAQL) threads the bilayer. At 437–467 (LGGQPIYSQLLHRTLKNDKLRQQDLPENQAS) the chain is on the cytoplasmic side. Chloride is bound at residue Y443.

The protein belongs to the chloride channel (TC 2.A.49) family. ClcA subfamily. In terms of assembly, homodimer.

It localises to the cell inner membrane. The catalysed reaction is 2 chloride(in) + H(+)(out) = 2 chloride(out) + H(+)(in). In terms of biological role, proton-coupled chloride transporter. Functions as antiport system and exchanges two chloride ions for 1 proton. Probably acts as an electrical shunt for an outwardly-directed proton pump that is linked to amino acid decarboxylation, as part of the extreme acid resistance (XAR) response. The chain is H(+)/Cl(-) exchange transporter ClcA from Vibrio parahaemolyticus serotype O3:K6 (strain RIMD 2210633).